Here is a 319-residue protein sequence, read N- to C-terminus: 7,8-didemethyl-8-hydroxy-5-deazariboflavin synthase (319 aa).

The Radical SAM core domain occupies 6 to 236; that stretch reads VTYSPAFTLV…AEITIQIPPN (231 aa). Cysteine 20, cysteine 24, and cysteine 27 together coordinate [4Fe-4S] cluster.

It belongs to the radical SAM superfamily. CofG family. In terms of assembly, consists of two subunits, CofG and CofH. The cofactor is [4Fe-4S] cluster.

It carries out the reaction 5-amino-5-(4-hydroxybenzyl)-6-(D-ribitylimino)-5,6-dihydrouracil + S-adenosyl-L-methionine = 7,8-didemethyl-8-hydroxy-5-deazariboflavin + 5'-deoxyadenosine + L-methionine + NH4(+) + H(+). It participates in cofactor biosynthesis; coenzyme F0 biosynthesis. Its function is as follows. Catalyzes the radical-mediated synthesis of 7,8-didemethyl-8-hydroxy-5-deazariboflavin from 5-amino-5-(4-hydroxybenzyl)-6-(D-ribitylimino)-5,6-dihydrouracil. This is 7,8-didemethyl-8-hydroxy-5-deazariboflavin synthase from Gloeobacter violaceus (strain ATCC 29082 / PCC 7421).